Consider the following 227-residue polypeptide: DNA utilization protein YhgH (227 aa).

This sequence belongs to the ComF/GntX family.

Its function is as follows. Required for the use of extracellular DNA as a nutrient. Has been suggested to be involved in gluconate metabolism. The chain is DNA utilization protein YhgH from Escherichia coli (strain K12).